Here is a 289-residue protein sequence, read N- to C-terminus: Heme oxygenase 1 (289 aa).

Residues 1-12 (MERPQPDSSMPQ) show a composition bias toward polar residues. Positions 1-24 (MERPQPDSSMPQDLSEALKEATKE) are disordered. At 1–266 (MERPQPDSSM…KPQPSVLSQA (266 aa)) the chain is on the cytoplasmic side. Positions 19, 26, 135, and 184 each coordinate heme b. Residues 239 to 261 (RRAGSKVQDLAPTKASRGKPQPS) are disordered. Residue Ser243 is modified to Phosphoserine. Residues 267–289 (PLLRWVLTLSFLVATVAVGLYAM) form a helical; Anchor for type IV membrane protein membrane-spanning segment.

The protein belongs to the heme oxygenase family. Homodimer and higher order homooligomer. Oligomerization is crucial for its stability and function in the endoplasmic reticulum. Interacts with FLVCR2; this interaction is potentiated in the presence of heme. Post-translationally, a soluble form arises by proteolytic removal of the membrane anchor.

Its subcellular location is the endoplasmic reticulum membrane. The catalysed reaction is heme b + 3 reduced [NADPH--hemoprotein reductase] + 3 O2 = biliverdin IXalpha + CO + Fe(2+) + 3 oxidized [NADPH--hemoprotein reductase] + 3 H2O + H(+). Inhibited by metalloporphyrins such as Sn-, Co-, Mn- and Zn-protoporphyrins. Catalyzes the oxidative cleavage of heme at the alpha-methene bridge carbon, released as carbon monoxide (CO), to generate biliverdin IXalpha, while releasing the central heme iron chelate as ferrous iron. Affords protection against programmed cell death and this cytoprotective effect relies on its ability to catabolize free heme and prevent it from sensitizing cells to undergo apoptosis. Functionally, catalyzes the oxidative cleavage of heme at the alpha-methene bridge carbon, released as carbon monoxide (CO), to generate biliverdin IXalpha, while releasing the central heme iron chelate as ferrous iron. The sequence is that of Heme oxygenase 1 (HMOX1) from Bos taurus (Bovine).